The following is a 378-amino-acid chain: Probable 3-hydroxyisobutyryl-CoA hydrolase 2 (378 aa).

Substrate-binding residues include Gly-115, Glu-138, and Asp-146. The short motif at 376–378 is the Microbody targeting signal element; that stretch reads AKL.

Belongs to the enoyl-CoA hydratase/isomerase family.

It is found in the peroxisome. The catalysed reaction is 3-hydroxy-2-methylpropanoyl-CoA + H2O = 3-hydroxy-2-methylpropanoate + CoA + H(+). It participates in amino-acid degradation; L-valine degradation. Its function is as follows. Involved in valine catabolism. This Arabidopsis thaliana (Mouse-ear cress) protein is Probable 3-hydroxyisobutyryl-CoA hydrolase 2.